The chain runs to 163 residues: Ribosome maturation factor RimP (163 aa).

It belongs to the RimP family.

It localises to the cytoplasm. Required for maturation of 30S ribosomal subunits. In Polynucleobacter asymbioticus (strain DSM 18221 / CIP 109841 / QLW-P1DMWA-1) (Polynucleobacter necessarius subsp. asymbioticus), this protein is Ribosome maturation factor RimP.